The sequence spans 274 residues: Orotidine 5'-phosphate decarboxylase (274 aa).

The active-site Proton donor is K95.

The protein belongs to the OMP decarboxylase family. Type 2 subfamily.

It catalyses the reaction orotidine 5'-phosphate + H(+) = UMP + CO2. It functions in the pathway pyrimidine metabolism; UMP biosynthesis via de novo pathway; UMP from orotate: step 2/2. The protein is Orotidine 5'-phosphate decarboxylase of Paracidovorax citrulli (strain AAC00-1) (Acidovorax citrulli).